Reading from the N-terminus, the 798-residue chain is uncharacterized protein (798 aa).

Positions 432–573 (KLTDNLSNKS…KNKAYRGRRV (142 aa)) are disordered. Low complexity-rich tracts occupy residues 438–449 (SNKSSNDNTSET), 456–465 (RSSNSRNSDN), 473–487 (SKTQSSDSSKSSRIP), and 495–510 (STNSVVSVGSTGSDVY). The segment covering 519–529 (PSRSTYKSRTI) has biased composition (polar residues). Residues 535 to 547 (ESSPVSSRTSSPV) are compositionally biased toward low complexity. The span at 548 to 562 (DDSRLKQSRISEDKP) shows a compositional bias: basic and acidic residues. The span at 563-572 (RKNKAYRGRR) shows a compositional bias: basic residues.

It is found in the virion. This is an uncharacterized protein from Acanthamoeba polyphaga (Amoeba).